The chain runs to 1358 residues: Tenascin-R (1358 aa).

A signal peptide spans 1-31 (MGADGETVVLKNMLIGINLILLGSMIKPSEC). O-linked (GalNAc...) threonine glycosylation is found at threonine 36 and threonine 37. The N-linked (GlcNAc...) asparagine glycan is linked to asparagine 55. Residues 127–157 (CASSAQVLQELLSRIEMLEREVSVLRDQCNA) adopt a coiled-coil conformation. Serine 176 carries an O-linked (Xyl...) (chondroitin sulfate) serine glycan. 2 N-linked (GlcNAc...) asparagine glycosylation sites follow: asparagine 180 and asparagine 198. 3 EGF-like domains span residues 188 to 199 (CICNEGWFGKNC), 219 to 230 (CICDSEYSGDDC), and 250 to 261 (CVCEEPYTGEDC). A glycan (O-linked (Xyl...) (chondroitin sulfate) serine) is linked at serine 271. N-linked (GlcNAc...) asparagine glycosylation occurs at asparagine 278. In terms of domain architecture, EGF-like 4 spans 281 to 292 (CLCEEGYVGEDC). 3 cysteine pairs are disulfide-bonded: cysteine 292/cysteine 301, cysteine 297/cysteine 312, and cysteine 314/cysteine 323. Serine 302 carries an O-linked (Xyl...) (chondroitin sulfate) serine glycan. Residues 312–323 (CVCEEGYQGPDC) form the EGF-like 5 domain. Fibronectin type-III domains are found at residues 328 to 420 (PPED…TPQG), 421 to 505 (LQFK…TVID), 506 to 595 (GPTQ…TEID), 596 to 687 (APKN…TELD), 688 to 777 (SPRD…FRPI), 778 to 865 (SHLH…TGID), 866 to 955 (PPKD…AMDN), 956 to 1042 (PVDL…TLLD), and 1043 to 1130 (PPAN…TGGR). N-linked (GlcNAc...) asparagine glycosylation is found at asparagine 392, asparagine 470, and asparagine 581. Phosphoserine is present on serine 724. 5 N-linked (GlcNAc...) asparagine glycosylation sites follow: asparagine 791, asparagine 874, asparagine 1036, asparagine 1046, and asparagine 1261. Residues 1129 to 1344 (GRVFPHPQDC…FVEMKMRPYN (216 aa)) enclose the Fibrinogen C-terminal domain.

The protein belongs to the tenascin family. In terms of assembly, forms oligomers. Interacts with CNTN1, TNC, and FN1. Interacts with BCAN and ACAN in a calcium-dependent manner. Interacts with SCN2B, PTPRZ1, and CSPG3. Post-translationally, contains N-linked oligosaccharides, O-linked sialylated structures and O-linked chondroitin sulfate glycosaminoglycans. Contains N-linked oligosaccharides with a sulfated carbohydrate structure. O-glycosylated on Thr-36 or Thr-37 with a core 1 or possibly core 8 glycan. In terms of tissue distribution, brain specific.

The protein localises to the secreted. The protein resides in the extracellular space. Its subcellular location is the extracellular matrix. In terms of biological role, neural extracellular matrix (ECM) protein involved in interactions with different cells and matrix components. These interactions can influence cellular behavior by either evoking a stable adhesion and differentiation, or repulsion and inhibition of neurite growth. Binding to cell surface gangliosides inhibits RGD-dependent integrin-mediated cell adhesion and results in an inhibition of PTK2/FAK1 (FAK) phosphorylation and cell detachment. Binding to membrane surface sulfatides results in a oligodendrocyte adhesion and differentiation. Interaction with CNTN1 induces a repulsion of neurons and an inhibition of neurite outgrowth. Interacts with SCN2B may play a crucial role in clustering and regulation of activity of sodium channels at nodes of Ranvier. TNR-linked chondroitin sulfate glycosaminoglycans are involved in the interaction with FN1 and mediate inhibition of cell adhesion and neurite outgrowth. The highly regulated addition of sulfated carbohydrate structure may modulate the adhesive properties of TNR over the course of development and during synapse maintenance. The polypeptide is Tenascin-R (TNR) (Homo sapiens (Human)).